The following is a 352-amino-acid chain: MTSQASAQAAGNTWPRLISALINGADLTADNTEWAMDTIMSGEATPSQIAGFLVALRSKGETVDEIAGLVEAMLAHANPVDIAGEKLDIVGTGGDQLNTVNISTMAALVCAGAGAKVVKHGNRASSSSSGSADVLEALGVRLDLPIERVARNAEEAGITFCFAQVFHPSFRHTAVPRRELAIPTAFNFLGPLTNPARVQASAVGVANERMAPLVAGVLAKRGSRGLVFRGSDGLDELTTTGPSTVWEIRNGEVTEQTFDPQALGIRAATVEELRGGDATANAAVVRDVLSGVAGPARDAVLLNAAAGLVAFDVDAEGTLTDRMAAALKRAEESIDSGAAAAVLEKWVALTRG.

5-phospho-alpha-D-ribose 1-diphosphate is bound by residues G91, 94–95, T99, 101–104, 119–127, and S131; these read GD, NIST, and KHGNRASSS. Anthranilate is bound at residue G91. S103 provides a ligand contact to Mg(2+). N122 contributes to the anthranilate binding site. Anthranilate is bound at residue R177. Residues D235 and E236 each contribute to the Mg(2+) site.

The protein belongs to the anthranilate phosphoribosyltransferase family. As to quaternary structure, homodimer. Mg(2+) is required as a cofactor.

The enzyme catalyses N-(5-phospho-beta-D-ribosyl)anthranilate + diphosphate = 5-phospho-alpha-D-ribose 1-diphosphate + anthranilate. It participates in amino-acid biosynthesis; L-tryptophan biosynthesis; L-tryptophan from chorismate: step 2/5. Its function is as follows. Catalyzes the transfer of the phosphoribosyl group of 5-phosphorylribose-1-pyrophosphate (PRPP) to anthranilate to yield N-(5'-phosphoribosyl)-anthranilate (PRA). The chain is Anthranilate phosphoribosyltransferase from Arthrobacter sp. (strain FB24).